Consider the following 2014-residue polypeptide: Leucine-rich repeat serine/threonine-protein kinase 1 (2014 aa).

ANK repeat units lie at residues 51–81 (QCPS…CEES), 86–116 (EKGQ…ELPT), 119–148 (TDDN…GPCT), 152–182 (LLNW…DPEN), and 193–222 (IVRL…YFCS). LRR repeat units lie at residues 279–300 (QITE…IPWG), 303–324 (NLKK…QSSD), 330–351 (RLLE…FLHL), 353–374 (KLQK…ENAT), 381–402 (KLQE…FMHS), 405–426 (SLTS…WSCP), 427–447 (LKCC…MAVF), 451–472 (HLRD…LFQL), 474–495 (ALMF…EKWT), 498–519 (QLKT…LKTK), 549–570 (SLEV…VCLL), 572–594 (NLSE…LGQL), and 596–617 (NLWQ…VRKE). The Roc domain occupies 632-826 (KAEKCKLMKM…QLIFHVTCNM (195 aa)). Residues Pro647, Arg648, Gly650, Lys651, Ser652, Thr653, Glu670, His758, Asp760, Cys806, and Lys807 each contribute to the GDP site. Residues 840-1237 (GRLIPRSYIS…PARLFLENSK (398 aa)) form the COR domain. A Phosphothreonine modification is found at Thr1061. Phosphoserine occurs at positions 1064 and 1074. Position 1075 is a phosphothreonine (Thr1075). Residues 1242–1525 (EGENSILGQG…VVSQMKDPTF (284 aa)) enclose the Protein kinase domain. Residues 1248–1256 (LGQGGSGTV) and Lys1270 contribute to the ATP site. Residue Asp1386 is the Proton acceptor of the active site. 7 WD repeats span residues 1539–1579 (AFFS…RMTC), 1582–1622 (MKLS…QALD), 1623–1668 (TPAV…SCSY), 1693–1729 (VKAM…RLEP), 1730–1778 (YAAP…YFCG), 1779–1948 (DPNP…AVLK), and 1950–1986 (RELN…AVWR). Positions 1791–1906 (PSVLETPGSH…MDGETFSQHL (116 aa)) are WD40 loop; involved in dimer stabilization. The interval 1839 to 1895 (SMSSYSSSPPHQDPRSPSSLPSSLTSYSSVPFSANYEDSDRLQEPSVTSDRTEHDLS) is disordered. Low complexity predominate over residues 1853–1871 (RSPSSLPSSLTSYSSVPFS).

It belongs to the protein kinase superfamily. TKL Ser/Thr protein kinase family. ROCO subfamily. Homodimer. The homodimer is autoinhibited and stabilized by its N-terminal residues and ANK repeats. Interacts with CSK. Mg(2+) is required as a cofactor. Requires Mn(2+) as cofactor. Post-translationally, autophosphorylated. Autophosphorylation in inhibited in its dimeric state. Phosphorylated by protein kinase C isozymes PRKCA, PRKCB, PRKCG, PRKCE, PRKCZ and PRKCT at Ser-1064, Ser-1074 and Thr-1075. Phosphorylation at these residues activates the kinase activity of LRRK1 to phosphorylate RAB7A. In terms of tissue distribution, expressed in osteoclasts and bone marrow stromal cells.

It localises to the cytoplasm. The protein resides in the cell membrane. The catalysed reaction is L-seryl-[protein] + ATP = O-phospho-L-seryl-[protein] + ADP + H(+). The enzyme catalyses L-threonyl-[protein] + ATP = O-phospho-L-threonyl-[protein] + ADP + H(+). Activated by phosphorylation by PKC. Binds both GTP and GDP; binding of GTP stimulates kinase activity. Sterically autoinhibited in its dimeric state. In terms of biological role, serine/threonine-protein kinase which phosphorylates RAB proteins involved in intracellular trafficking. Phosphorylates RAB7A; this activity is dependent on protein kinase C (PKC) activation. Plays a role in the negative regulation of bone mass, acting through the maturation of osteoclasts. This chain is Leucine-rich repeat serine/threonine-protein kinase 1, found in Mus musculus (Mouse).